Consider the following 291-residue polypeptide: Phosphoribosylaminoimidazole-succinocarboxamide synthase (291 aa).

Belongs to the SAICAR synthetase family.

It catalyses the reaction 5-amino-1-(5-phospho-D-ribosyl)imidazole-4-carboxylate + L-aspartate + ATP = (2S)-2-[5-amino-1-(5-phospho-beta-D-ribosyl)imidazole-4-carboxamido]succinate + ADP + phosphate + 2 H(+). The protein operates within purine metabolism; IMP biosynthesis via de novo pathway; 5-amino-1-(5-phospho-D-ribosyl)imidazole-4-carboxamide from 5-amino-1-(5-phospho-D-ribosyl)imidazole-4-carboxylate: step 1/2. This is Phosphoribosylaminoimidazole-succinocarboxamide synthase (ADE1) from Candida maltosa (Yeast).